A 336-amino-acid polypeptide reads, in one-letter code: D-alanine--D-alanine ligase (336 aa).

Positions 124 to 330 constitute an ATP-grasp domain; sequence KMWFSALGIP…FTEYLSLVIN (207 aa). 154–209 contributes to the ATP binding site; it reads ALENWGSIFVKAASQGSSVGCYKVDDSSKVADVLKDAFGYAPYVIVEKTIKARELE. Mg(2+)-binding residues include aspartate 284, glutamate 297, and asparagine 299.

This sequence belongs to the D-alanine--D-alanine ligase family. Mg(2+) serves as cofactor. It depends on Mn(2+) as a cofactor.

The protein localises to the cytoplasm. The enzyme catalyses 2 D-alanine + ATP = D-alanyl-D-alanine + ADP + phosphate + H(+). It functions in the pathway cell wall biogenesis; peptidoglycan biosynthesis. Its function is as follows. Cell wall formation. The sequence is that of D-alanine--D-alanine ligase from Shewanella sp. (strain ANA-3).